A 260-amino-acid chain; its full sequence is NAD kinase (260 aa).

Asp54 acts as the Proton acceptor in catalysis. Residues 54–55, 123–124, Arg150, Asp152, and 163–168 contribute to the NAD(+) site; these read DG, ND, and TAYSLS.

It belongs to the NAD kinase family. A divalent metal cation is required as a cofactor.

The protein resides in the cytoplasm. The catalysed reaction is NAD(+) + ATP = ADP + NADP(+) + H(+). Functionally, involved in the regulation of the intracellular balance of NAD and NADP, and is a key enzyme in the biosynthesis of NADP. Catalyzes specifically the phosphorylation on 2'-hydroxyl of the adenosine moiety of NAD to yield NADP. This Caldicellulosiruptor saccharolyticus (strain ATCC 43494 / DSM 8903 / Tp8T 6331) protein is NAD kinase.